We begin with the raw amino-acid sequence, 415 residues long: Proline-serine-threonine phosphatase-interacting protein 1 (415 aa).

Residues 5–264 form the F-BAR domain; that stretch reads LQFRDAFWCR…TLEGCDVEGD (260 aa). 2 coiled-coil regions span residues 94–133 and 162–215; these read LALALREELRSLEEFRERQKEQRKKYEAIMDRVQKSKLSL and SANG…TCEA. Ser-318 is subject to Phosphoserine. Tyr-344 bears the Phosphotyrosine; by ABL1 mark. The region spanning 358 to 415 is the SH3 domain; that stretch reads SSAQDYRALYDYTAQNSDELDISAGDILAVILEGEDGWWTVERNGQRGFVPGSYLEKL.

Homodimer. Homotrimer. Interacts (via coiled-coil domain) with CD2AP, PTPN12 and PTPN18. Interacts (via SH3 domain) with ABL1 and WAS. Interacts (via SH3 and coiled-coil domains) with MEFV (via B-box zinc finger); the interaction allows binding of MEFV to PYCARD and facilitates formation of PYCARD pyroptosomes. Interacts with DNM2 and FASLG. Interacts with CD2. In terms of processing, dephosphorylated on Tyr-344 by PTPN18, this event negatively regulates the association of PSTPIP1 with SH2 domain-containing proteins as tyrosine kinase. Phosphorylation of Tyr-344 is probably required for subsequent phosphorylation at other tyrosine residues. Phosphorylation is induced by activation of the EGFR and PDGFR in a ABL1 dependent manner. The phosphorylation regulates the interaction with WAS and with MEFV. In terms of tissue distribution, highly expressed in adult lung and spleen, and weakly expressed in testis, muscle, kidney, brain and heart. Highly expressed in spleen and thymus, moderately in lung, brain and muscle, and weakly expressed in heart and liver (at protein level).

The protein resides in the cytoplasm. The protein localises to the perinuclear region. Its subcellular location is the cell projection. It is found in the lamellipodium. It localises to the cleavage furrow. The protein resides in the cytoskeleton. The protein localises to the cell membrane. Its subcellular location is the uropodium. In terms of biological role, involved in regulation of the actin cytoskeleton. May regulate WAS actin-bundling activity. Bridges the interaction between ABL1 and PTPN18 leading to ABL1 dephosphorylation. May play a role as a scaffold protein between PTPN12 and WAS and allow PTPN12 to dephosphorylate WAS. Has the potential to physically couple CD2 and CD2AP to WAS. Acts downstream of CD2 and CD2AP to recruit WAS to the T-cell:APC contact site so as to promote the actin polymerization required for synapse induction during T-cell activation. Down-regulates CD2-stimulated adhesion through the coupling of PTPN12 to CD2. Also has a role in innate immunity and the inflammatory response. Recruited to inflammasomes by MEFV. Induces formation of pyroptosomes, large supramolecular structures composed of oligomerized PYCARD dimers which form prior to inflammatory apoptosis. Binding to MEFV allows MEFV to bind to PYCARD and facilitates pyroptosome formation. Regulates endocytosis and cell migration in neutrophils. The polypeptide is Proline-serine-threonine phosphatase-interacting protein 1 (Pstpip1) (Mus musculus (Mouse)).